The sequence spans 223 residues: Deoxyribose-phosphate aldolase (223 aa).

Asp91 (proton donor/acceptor) is an active-site residue. Lys153 acts as the Schiff-base intermediate with acetaldehyde in catalysis. Lys182 (proton donor/acceptor) is an active-site residue.

The protein belongs to the DeoC/FbaB aldolase family. DeoC type 1 subfamily.

Its subcellular location is the cytoplasm. It carries out the reaction 2-deoxy-D-ribose 5-phosphate = D-glyceraldehyde 3-phosphate + acetaldehyde. Its pathway is carbohydrate degradation; 2-deoxy-D-ribose 1-phosphate degradation; D-glyceraldehyde 3-phosphate and acetaldehyde from 2-deoxy-alpha-D-ribose 1-phosphate: step 2/2. Catalyzes a reversible aldol reaction between acetaldehyde and D-glyceraldehyde 3-phosphate to generate 2-deoxy-D-ribose 5-phosphate. This Yersinia pestis bv. Antiqua (strain Angola) protein is Deoxyribose-phosphate aldolase.